Here is a 590-residue protein sequence, read N- to C-terminus: MKRTNYAGNITEEYLNQTVTVKGWVAKRRNLGGLIFIDLRDREGIVQIVVNPETAAADVAEAADKARNEFVLEVTGKVVERASKNDKIKTGGIEIEATAIEILSTSKTTPFEIKDDVEVLDDTRLKYRYLDLRRPEMLKNITMRHATTRSIREYLDGAGFIDVETPFLNKSTPEGARDYLVPSRVNKGEFYALPQSPQLMKQLLMTAGLDRYYQIVKCFRDEDLRGDRQPEFTQVDLETSFLSEEEIQDLTEELIAKVMKDVKGIDVTLPFPRMKYDDAMNFYGSDKPDTRFELLLTDLSALAKTIDFKVFQEAEVVKAIVVKDAADKYSRKSIDKLTEQAKQNGAKGLAWVKFEKGEFAGGVSKFLAESTDSFVNELKLTDNDLVLFVADSLDVANSALGALRLTIGKQQGLIDFRQFNFLWVIDWPMFEWSDEEERYMSAHHPFTLPTKETQAFLSADGHSKDSDLKKVRAHAYDIVLNGYELGGGSLRINTRQLQEEMLSALGFKLEDANEQFGFLLEALDYGFPPHGGLALGLDRFVMLLAGKDNIREVIAFPKNNKASDPMTQAPSIVAEKQLEELSIKLANKDQ.

Glu-174 lines the L-aspartate pocket. The interval 198-201 (QLMK) is aspartate. Arg-220 contacts L-aspartate. Residues 220–222 (RDE) and Gln-229 each bind ATP. Position 443 (His-443) interacts with L-aspartate. Glu-484 contributes to the ATP binding site. Arg-491 lines the L-aspartate pocket. 536–539 (GLDR) contributes to the ATP binding site.

It belongs to the class-II aminoacyl-tRNA synthetase family. Type 1 subfamily. Homodimer.

Its subcellular location is the cytoplasm. The catalysed reaction is tRNA(Asp) + L-aspartate + ATP = L-aspartyl-tRNA(Asp) + AMP + diphosphate. Its function is as follows. Catalyzes the attachment of L-aspartate to tRNA(Asp) in a two-step reaction: L-aspartate is first activated by ATP to form Asp-AMP and then transferred to the acceptor end of tRNA(Asp). In Lactococcus lactis subsp. lactis (strain IL1403) (Streptococcus lactis), this protein is Aspartate--tRNA ligase.